Reading from the N-terminus, the 295-residue chain is Pyridoxal 5'-phosphate synthase subunit PdxS (295 aa).

Asp25 lines the D-ribose 5-phosphate pocket. Catalysis depends on Lys82, which acts as the Schiff-base intermediate with D-ribose 5-phosphate. A D-ribose 5-phosphate-binding site is contributed by Gly154. Residue Arg166 coordinates D-glyceraldehyde 3-phosphate. D-ribose 5-phosphate-binding positions include Gly215 and 236–237 (GS).

The protein belongs to the PdxS/SNZ family. In the presence of PdxT, forms a dodecamer of heterodimers.

The enzyme catalyses aldehydo-D-ribose 5-phosphate + D-glyceraldehyde 3-phosphate + L-glutamine = pyridoxal 5'-phosphate + L-glutamate + phosphate + 3 H2O + H(+). It participates in cofactor biosynthesis; pyridoxal 5'-phosphate biosynthesis. Catalyzes the formation of pyridoxal 5'-phosphate from ribose 5-phosphate (RBP), glyceraldehyde 3-phosphate (G3P) and ammonia. The ammonia is provided by the PdxT subunit. Can also use ribulose 5-phosphate and dihydroxyacetone phosphate as substrates, resulting from enzyme-catalyzed isomerization of RBP and G3P, respectively. The protein is Pyridoxal 5'-phosphate synthase subunit PdxS of Actinobacillus pleuropneumoniae serotype 3 (strain JL03).